Here is a 370-residue protein sequence, read N- to C-terminus: Sodium-dependent organic anion transporter (370 aa).

The segment at 1 to 24 (MSADCEGNSTCPANSTEEDPPVGM) is disordered. The Extracellular portion of the chain corresponds to 1 to 32 (MSADCEGNSTCPANSTEEDPPVGMEGQGSLKL). N8 and N14 each carry an N-linked (GlcNAc...) asparagine glycan. The helical transmembrane segment at 33 to 53 (VFTVLSAVMVGLVMFSFGCSV) threads the bilayer. The Cytoplasmic portion of the chain corresponds to 54-67 (ESRKLWLHLRRPWG). The helical transmembrane segment at 68–88 (IAVGLLCQFGLMPLTAYLLAI) threads the bilayer. Topologically, residues 89–97 (GFGLKPFQA) are extracellular. The helical transmembrane segment at 98 to 118 (IAVLIMGSCPGGTVSNVLTFW) threads the bilayer. The Cytoplasmic portion of the chain corresponds to 119-126 (VDGDMDLS). A helical membrane pass occupies residues 127–147 (ISMTTCSTVAALGMMPLCLYV). Topologically, residues 148–159 (YTRSWTLPQSLT) are extracellular. Residues 160 to 180 (IPYQSIGITLVSLVVPVASGI) form a helical membrane-spanning segment. The Cytoplasmic segment spans residues 181–195 (YVNYRWPKQATFILK). Residues 196–216 (VGAAVGGMLLLVVAVTGVVLA) form a helical membrane-spanning segment. Residues 217–224 (KGWNIDVT) lie on the Extracellular side of the membrane. The helical transmembrane segment at 225–245 (LLVISCIFPLVGHVMGFLLAF) threads the bilayer. The Cytoplasmic segment spans residues 246–265 (LTHQSWQRCRTISIETGAQN). The chain crosses the membrane as a helical span at residues 266–283 (IQLCIAMMQLSFSAEYLV). Q284 is a topological domain (extracellular). The chain crosses the membrane as a helical span at residues 285-305 (LLNFALAYGLFQVLHGLLIVA). Residues 306-370 (AYQAYKRRQK…ELTSHVPSCE (65 aa)) lie on the Cytoplasmic side of the membrane.

This sequence belongs to the bile acid:sodium symporter (BASS) (TC 2.A.28) family. In terms of processing, glycosylated. As to expression, highly expressed in heart, lung, spleen and adrenal gland. Moderately expressed in skeletal muscle, testis and small intestine.

The protein localises to the membrane. It carries out the reaction estrone 3-sulfate(out) + 2 Na(+)(out) = estrone 3-sulfate(in) + 2 Na(+)(in). The enzyme catalyses 17beta-estradiol 3-sulfate(out) + 2 Na(+)(out) = 17beta-estradiol 3-sulfate(in) + 2 Na(+)(in). The catalysed reaction is dehydroepiandrosterone 3-sulfate(out) + 2 Na(+)(out) = dehydroepiandrosterone 3-sulfate(in) + 2 Na(+)(in). It catalyses the reaction androst-5-ene-diol 3-sulfate(out) + 2 Na(+)(out) = androst-5-ene-diol 3-sulfate(in) + 2 Na(+)(in). It carries out the reaction pregnenolone sulfate(out) + 2 Na(+)(out) = pregnenolone sulfate(in) + 2 Na(+)(in). The enzyme catalyses taurolithocholate 3-sulfate(out) + 2 Na(+)(out) = taurolithocholate 3-sulfate(in) + 2 Na(+)(in). The catalysed reaction is androsterone 3alpha-sulfate(out) + 2 Na(+)(out) = androsterone 3alpha-sulfate(in) + 2 Na(+)(in). It catalyses the reaction 5alpha-dihydrotestosterone sulfate(out) + 2 Na(+)(out) = 5alpha-dihydrotestosterone sulfate(in) + 2 Na(+)(in). It carries out the reaction 17beta-estradiol 17-sulfate(out) + 2 Na(+)(out) = 17beta-estradiol 17-sulfate(in) + 2 Na(+)(in). The enzyme catalyses 17alpha-hydroxypregnenolone 3-sulfate(out) + 2 Na(+)(out) = 17alpha-hydroxypregnenolone 3-sulfate(in) + 2 Na(+)(in). The catalysed reaction is epiandrosterone 3-sulfate(out) + 2 Na(+)(out) = epiandrosterone 3-sulfate(in) + 2 Na(+)(in). It catalyses the reaction epitestosterone 17-sulfate(out) + 2 Na(+)(out) = epitestosterone 17-sulfate(in) + 2 Na(+)(in). It carries out the reaction testosterone 17-sulfate(out) + 2 Na(+)(out) = testosterone 17-sulfate(in) + 2 Na(+)(in). The enzyme catalyses 16alpha-hydroxydehydroepiandrosterone 3-sulfate(out) + 2 Na(+)(out) = 16alpha-hydroxydehydroepiandrosterone 3-sulfate(in) + 2 Na(+)(in). Its function is as follows. Transports sulfoconjugated steroid hormones from the extracellular compartment into the cytosol in a sodium-dependent manner without hydrolysis. Steroid sulfate hormones are commonly considered to be biologically inactive metabolites, that may be activated by steroid sulfatases into free steroids. May play an important role by delivering sulfoconjugated steroids to specific target cells in reproductive organs. May play a role transporting the estriol precursor 16alpha-hydroxydehydroepiandrosterone 3-sulfate (16a-OH-DHEAS) at the fetal blood vessel endothelium. Can also transport other sulfoconjugated molecules such as taurolithocholic acid-3-sulfate and sulfoconjugated pyrenes. This chain is Sodium-dependent organic anion transporter (Slc10a6), found in Rattus norvegicus (Rat).